Reading from the N-terminus, the 173-residue chain is NADH-ubiquinone oxidoreductase chain 6 (173 aa).

5 helical membrane-spanning segments follow: residues 1 to 21 (MTYL…AVAS), 27 to 47 (YGVV…LSLG), 48 to 68 (VSFV…VVFV), 88 to 108 (VGYG…GGLI), and 139 to 159 (YGVG…FVVL).

This sequence belongs to the complex I subunit 6 family.

It localises to the mitochondrion membrane. It catalyses the reaction a ubiquinone + NADH + 5 H(+)(in) = a ubiquinol + NAD(+) + 4 H(+)(out). In terms of biological role, core subunit of the mitochondrial membrane respiratory chain NADH dehydrogenase (Complex I) that is believed to belong to the minimal assembly required for catalysis. Complex I functions in the transfer of electrons from NADH to the respiratory chain. The immediate electron acceptor for the enzyme is believed to be ubiquinone. This chain is NADH-ubiquinone oxidoreductase chain 6 (MT-ND6), found in Calidris maritima (Purple sandpiper).